Reading from the N-terminus, the 369-residue chain is Peptide chain release factor 2 (369 aa).

Q247 carries the post-translational modification N5-methylglutamine.

Belongs to the prokaryotic/mitochondrial release factor family. Post-translationally, methylated by PrmC. Methylation increases the termination efficiency of RF2.

Its subcellular location is the cytoplasm. Functionally, peptide chain release factor 2 directs the termination of translation in response to the peptide chain termination codons UGA and UAA. The polypeptide is Peptide chain release factor 2 (Phenylobacterium zucineum (strain HLK1)).